The following is a 121-amino-acid chain: Large ribosomal subunit protein bL20 (121 aa).

This sequence belongs to the bacterial ribosomal protein bL20 family.

In terms of biological role, binds directly to 23S ribosomal RNA and is necessary for the in vitro assembly process of the 50S ribosomal subunit. It is not involved in the protein synthesizing functions of that subunit. The chain is Large ribosomal subunit protein bL20 from Polynucleobacter necessarius subsp. necessarius (strain STIR1).